The primary structure comprises 632 residues: Chaperone protein DnaK (632 aa).

The residue at position 199 (T199) is a Phosphothreonine; by autocatalysis. The span at 597-611 (AAQQAGQAEGQAAQE) shows a compositional bias: low complexity. The segment at 597-632 (AAQQAGQAEGQAAQEPSQSTGNAQAEATDAEYEEVK) is disordered. The span at 612 to 621 (PSQSTGNAQA) shows a compositional bias: polar residues.

It belongs to the heat shock protein 70 family.

Its function is as follows. Acts as a chaperone. This chain is Chaperone protein DnaK, found in Amoebophilus asiaticus (strain 5a2).